A 620-amino-acid polypeptide reads, in one-letter code: DNA primase (620 aa).

The CHC2-type zinc finger occupies 38–62; it reads CPFHADQNPSMTVSVAKNIFKCFSC. Residues 266–350 enclose the Toprim domain; it reads LKLYLVEGYF…IVEVVDWNQA (85 aa). Mg(2+) contacts are provided by E272, D319, and D321.

The protein belongs to the DnaG primase family. Monomer. Interacts with DnaB. Zn(2+) serves as cofactor. It depends on Mg(2+) as a cofactor.

It carries out the reaction ssDNA + n NTP = ssDNA/pppN(pN)n-1 hybrid + (n-1) diphosphate.. In terms of biological role, RNA polymerase that catalyzes the synthesis of short RNA molecules used as primers for DNA polymerase during DNA replication. The protein is DNA primase of Mycoplasma pneumoniae (strain ATCC 29342 / M129 / Subtype 1) (Mycoplasmoides pneumoniae).